Consider the following 308-residue polypeptide: Very-long-chain enoyl-CoA reductase (308 aa).

Topologically, residues 1-86 (MKHYEVEIRD…YFRDLGAQIS (86 aa)) are cytoplasmic. The residue at position 22 (Lys22) is an N6-acetyllysine. At Ser58 the chain carries Phosphoserine. Lys60 bears the N6-acetyllysine mark. The helical transmembrane segment at 87–106 (WVTVFLTEYAGPLFIYLLFY) threads the bilayer. Topologically, residues 107–124 (FRVPFIYGRKYDFTSSRH) are lumenal. Residues 125–147 (TVVHLACMCHSFHYIKRLLETLF) form a helical membrane-spanning segment. Residues 148–158 (VHRFSHGTMPL) lie on the Cytoplasmic side of the membrane. The helical transmembrane segment at 159-180 (RNIFKNCTYYWGFAAWMAYYIN) threads the bilayer. Residues 181 to 189 (HPLYTPPTY) lie on the Lumenal side of the membrane. A helical membrane pass occupies residues 190 to 216 (GVQQVKLALAVFVICQLGNFSIHMALR). Topologically, residues 217-245 (DLRPAGSKTRKIPYPTKNPFTWLFLLVSC) are cytoplasmic. A helical transmembrane segment spans residues 246-262 (PNYTYEVGSWIGFAILT). Residues 263–264 (QC) lie on the Lumenal side of the membrane. A helical membrane pass occupies residues 265–292 (VPVALFSLVGFTQMTIWAKGKHRSYLKE). Over 293–308 (FRDYPPLRMPIIPFLL) the chain is Cytoplasmic.

The protein belongs to the steroid 5-alpha reductase family. In terms of assembly, interacts with ELOVL1 and LASS2. In terms of processing, glycosylated.

The protein resides in the endoplasmic reticulum membrane. It carries out the reaction a very-long-chain 2,3-saturated fatty acyl-CoA + NADP(+) = a very-long-chain (2E)-enoyl-CoA + NADPH + H(+). It catalyses the reaction octadecanoyl-CoA + NADP(+) = (2E)-octadecenoyl-CoA + NADPH + H(+). The enzyme catalyses (2E,7Z,10Z,13Z,16Z)-docosapentaenoyl-CoA + NADPH + H(+) = (7Z,10Z,13Z,16Z)-docosatetraenoyl-CoA + NADP(+). The catalysed reaction is (2E,7Z,10Z,13Z,16Z,19Z)-docosahexaenoyl-CoA + NADPH + H(+) = (7Z,10Z,13Z,16Z,19Z)-docosapentaenoyl-CoA + NADP(+). It carries out the reaction (2E,8Z,11Z,14Z)-eicosatetraenoyl-CoA + NADPH + H(+) = (8Z,11Z,14Z)-eicosatrienoyl-CoA + NADP(+). It catalyses the reaction (2E)-hexadecenoyl-CoA + NADPH + H(+) = hexadecanoyl-CoA + NADP(+). It participates in lipid metabolism; fatty acid biosynthesis. Its pathway is lipid metabolism; sphingolipid metabolism. Functionally, involved in both the production of very long-chain fatty acids for sphingolipid synthesis and the degradation of the sphingosine moiety in sphingolipids through the sphingosine 1-phosphate metabolic pathway. Catalyzes the last of the four reactions of the long-chain fatty acids elongation cycle. This endoplasmic reticulum-bound enzymatic process, allows the addition of 2 carbons to the chain of long- and very long-chain fatty acids/VLCFAs per cycle. This enzyme reduces the trans-2,3-enoyl-CoA fatty acid intermediate to an acyl-CoA that can be further elongated by entering a new cycle of elongation. Thereby, it participates in the production of VLCFAs of different chain lengths that are involved in multiple biological processes as precursors of membrane lipids and lipid mediators. Catalyzes the saturation step of the sphingosine 1-phosphate metabolic pathway, the conversion of trans-2-hexadecenoyl-CoA to palmitoyl-CoA. The sequence is that of Very-long-chain enoyl-CoA reductase (Tecr) from Mus musculus (Mouse).